Reading from the N-terminus, the 246-residue chain is UDP-N-acetyl-D-mannosaminuronic acid transferase (246 aa).

Belongs to the glycosyltransferase 26 family.

The catalysed reaction is UDP-N-acetyl-alpha-D-mannosaminouronate + N-acetyl-alpha-D-glucosaminyl-di-trans,octa-cis-undecaprenyl diphosphate = beta-D-ManNAcA-(1-&gt;4)-alpha-D-GlcNAc-di-trans,octa-cis-undecaprenyl diphosphate + UDP + H(+). The protein operates within bacterial outer membrane biogenesis; enterobacterial common antigen biosynthesis. Its function is as follows. Catalyzes the synthesis of Und-PP-GlcNAc-ManNAcA (Lipid II), the second lipid-linked intermediate involved in enterobacterial common antigen (ECA) synthesis. This Citrobacter koseri (strain ATCC BAA-895 / CDC 4225-83 / SGSC4696) protein is UDP-N-acetyl-D-mannosaminuronic acid transferase.